We begin with the raw amino-acid sequence, 442 residues long: MLVHTYSAMERPDGLGAAAGGARLSSLPQAAYGPAPPLCHTPAATAAAEFQPPYFPPPYPQPPLPYGQAPDAAAAFPHLAGDPYGGLAPLAQPQPPQAAWAAPRAAARAHEEPPGLLAPPARALGLDPRRDYATAVPRLLHGLADGAHGLADAPLGLPGLAAAPGLEDLQAMDEPGMSLLDQSVIKKVPIPSKASSLSALSLAKDSLVGGITNPGEVFCSVPGRLSLLSSTSKYKVTVGEVQRRLSPPECLNASLLGGVLRRAKSKNGGRCLRERLEKIGLNLPAGRRKAANVTLLTSLVEGEAVHLARDFGYVCETEFPAKAAAEYLCRQHADPGELHSRKSMLLAAKQICKEFADLMAQDRSPLGNSRPALILEPGVQSCLTHFSLITHGFGGPAICAALTAFQNYLLESLKGLDKMFLSSVGSGHGETKASEKDAKHRK.

The short motif at 54 to 59 is the PPxY motif element; it reads YFPPPY. Serine 246 bears the Phosphoserine; by PKA mark. The interval 287–417 is H-S-H (helix-span-helix), dimerization; the sequence is RRKAANVTLL…YLLESLKGLD (131 aa).

It belongs to the AP-2 family. In terms of assembly, binds DNA as a dimer. Can form homodimers or heterodimers with other AP-2 family members. In terms of tissue distribution, expressed in skin, primary keratinocytes, immortalized keratinocytes, and HeLa cell line.

Its subcellular location is the nucleus. Sequence-specific DNA-binding protein that interacts with inducible viral and cellular enhancer elements to regulate transcription of selected genes. AP-2 factors bind to the consensus sequence 5'-GCCNNNGGC-3' and activate genes involved in a large spectrum of important biological functions including proper eye, face, body wall, limb and neural tube development. They also suppress a number of genes including MCAM/MUC18, C/EBP alpha and MYC. AP-2-epsilon may play a role in the development of the CNS and in cartilage differentiation. In Homo sapiens (Human), this protein is Transcription factor AP-2-epsilon.